Here is a 1219-residue protein sequence, read N- to C-terminus: Polyamine-transporting ATPase 13A3 (1219 aa).

At 1–28 the chain is on the cytoplasmic side; that stretch reads MDKEERKTINKGQEDEMEIHGYNLCRWK. An intramembrane segment occupies 29 to 49; sequence LAMVFVGVICTGGFLLLLLYW. Over 50 to 201 the chain is Cytoplasmic; sequence LPEWRVKATC…IAVKVPSVFK (152 aa). Residues 202–222 form a helical membrane-spanning segment; it reads LLIKEVLNPFYIFQLFSVILW. Residues 223–228 lie on the Lumenal side of the membrane; the sequence is SVDEYY. A helical membrane pass occupies residues 229–249; the sequence is YYALAIVIMSVVSIISSLYSI. At 250-405 the chain is on the cytoplasmic side; sequence RKQYVMLHDM…KPTDFKLYRD (156 aa). The helical transmembrane segment at 406-426 threads the bilayer; sequence AYLFLLCLVVVAGIGFIYTII. The Lumenal portion of the chain corresponds to 427–444; sequence NSILNEKEVQEIIIKSLD. A helical membrane pass occupies residues 445 to 465; that stretch reads IITITVPPALPAAMTAGIVYA. The Cytoplasmic segment spans residues 466-936; it reads QRRLKKVGIF…ALMTSFCVFK (471 aa). Residue Asp-494 is the 4-aspartylphosphate intermediate of the active site. Residues Asp-494 and Thr-496 each coordinate Mg(2+). ATP contacts are provided by residues 494–496, Phe-624, Arg-680, and Asp-746; that span reads DKT. Residue Ser-813 is modified to Phosphoserine. Residues Asp-879 and Asp-883 each coordinate Mg(2+). 879 to 883 is a binding site for ATP; that stretch reads DGAND. Residues 937-957 traverse the membrane as a helical segment; the sequence is FMALYSIIQYFSVTLLYSILS. A topological domain (lumenal) is located at residue Asn-958. A helical membrane pass occupies residues 959-979; that stretch reads LGDFQFLFIDLAIILVVVFTM. Residues 980 to 995 lie on the Cytoplasmic side of the membrane; sequence SLNPAWKELVAQRPPS. Residues 996-1016 traverse the membrane as a helical segment; it reads GLISGALLFSVLSQIVISVGF. Residues 1017-1066 are Lumenal-facing; the sequence is QSLGFFWVKQYKVCDPNSDVCNTTRSACWNSSHLYNGTELDSCKIQNYEN. Residues 1067 to 1087 form a helical membrane-spanning segment; it reads TTVFFISSFQYLTVAVAFSKG. At 1088 to 1098 the chain is on the cytoplasmic side; that stretch reads KPFRQPCYKNY. A helical transmembrane segment spans residues 1099-1119; sequence FFVISVIILYVFILFIMLHPV. Residues 1120 to 1136 lie on the Lumenal side of the membrane; sequence ASVDQVLEIMCVPYQWR. The chain crosses the membrane as a helical span at residues 1137 to 1157; that stretch reads IYMLIIVLINAFVSITVEESV. Over 1158–1219 the chain is Cytoplasmic; that stretch reads DRWGKCCLSW…NGSCQIITIA (62 aa).

It belongs to the cation transport ATPase (P-type) (TC 3.A.3) family. Type V subfamily. Expression is greatest in liver, followed by kidney, colon, stomach, brain and small intestine. Isoform 1 is highly expressed in the kidney while isoform 2 is highly expressed in the brain.

The protein localises to the recycling endosome membrane. Its subcellular location is the early endosome membrane. It localises to the late endosome membrane. It carries out the reaction putrescine(out) + ATP + H2O = putrescine(in) + ADP + phosphate + H(+). Functionally, ATP-driven pump involved in endocytosis-dependent polyamine transport. Uses ATP as an energy source to transfer polyamine precursor putrescine from the endosomal compartment to the cytosol. This Mus musculus (Mouse) protein is Polyamine-transporting ATPase 13A3.